A 250-amino-acid chain; its full sequence is Acetylglutamate kinase (250 aa).

Residues G41–G42, R63, and N156 each bind substrate.

The protein belongs to the acetylglutamate kinase family. ArgB subfamily.

The protein resides in the cytoplasm. The catalysed reaction is N-acetyl-L-glutamate + ATP = N-acetyl-L-glutamyl 5-phosphate + ADP. The protein operates within amino-acid biosynthesis; L-arginine biosynthesis; N(2)-acetyl-L-ornithine from L-glutamate: step 2/4. Its function is as follows. Catalyzes the ATP-dependent phosphorylation of N-acetyl-L-glutamate. The protein is Acetylglutamate kinase of Listeria monocytogenes serotype 4b (strain CLIP80459).